The following is a 272-amino-acid chain: GPN-loop GTPase 3 (272 aa).

12–17 (GAGKST) serves as a coordination point for GTP. The short motif at 69–71 (GPN) is the Gly-Pro-Asn (GPN)-loop; involved in dimer interface element. 172-175 (SKMD) is a GTP binding site. Positions 253 to 272 (QYGEDEEPKVPKDMDDGDFD) are disordered.

Belongs to the GPN-loop GTPase family. Heterodimers with GPN1 or GPN2. Binds to RNA polymerase II (RNAPII).

Its function is as follows. Small GTPase required for proper nuclear import of RNA polymerase II and III (RNAPII and RNAPIII). May act at an RNAP assembly step prior to nuclear import. The chain is GPN-loop GTPase 3 from Cryptococcus neoformans var. neoformans serotype D (strain JEC21 / ATCC MYA-565) (Filobasidiella neoformans).